The chain runs to 185 residues: Elongation factor P (185 aa).

It belongs to the elongation factor P family.

It localises to the cytoplasm. Its pathway is protein biosynthesis; polypeptide chain elongation. In terms of biological role, involved in peptide bond synthesis. Stimulates efficient translation and peptide-bond synthesis on native or reconstituted 70S ribosomes in vitro. Probably functions indirectly by altering the affinity of the ribosome for aminoacyl-tRNA, thus increasing their reactivity as acceptors for peptidyl transferase. The polypeptide is Elongation factor P (Staphylococcus epidermidis (strain ATCC 35984 / DSM 28319 / BCRC 17069 / CCUG 31568 / BM 3577 / RP62A)).